A 185-amino-acid polypeptide reads, in one-letter code: Ribosome-recycling factor (185 aa).

It belongs to the RRF family.

The protein resides in the cytoplasm. In terms of biological role, responsible for the release of ribosomes from messenger RNA at the termination of protein biosynthesis. May increase the efficiency of translation by recycling ribosomes from one round of translation to another. This chain is Ribosome-recycling factor, found in Bacillus anthracis (strain A0248).